We begin with the raw amino-acid sequence, 1537 residues long: Flocculation protein FLO1 (1537 aa).

The first 24 residues, 1-24, serve as a signal peptide directing secretion; the sequence is MTMPHRYMFLAVFTLLALTSVASG. Residues 74–249 enclose the PA14 domain; it reads GGQTDISIDY…GTTVSDDFEG (176 aa). N-linked (GlcNAc...) asparagine glycosylation is found at N135 and N187. Residues 197-240 form a sugar recognition region; that stretch reads GGSLPPNIEGTVYMYAGYYYPMKVVYSNAVSWGTLPISVTLPDG. Residue N262 is glycosylated (N-linked (GlcNAc...) asparagine). 18 repeat units span residues 278–322, 323–367, 368–412, 413–457, 458–502, 503–547, 548–592, 593–637, 638–682, 683–727, 728–772, 773–817, 818–862, 863–907, 908–952, 953–997, 998–1042, and 1043–1087. The segment at 278–1087 is 18 X 45 AA approximate tandem repeats, Thr-rich; that stretch reads TTTEPWTGTF…KTPTTAISSS (810 aa). N329, N374, N419, N464, N509, N554, N599, N644, N689, and N734 each carry an N-linked (GlcNAc...) asparagine glycan. Disordered regions lie at residues 770–799 and 860–889; these read LISTTTEPWTGTFTSTSTEMTTVTGTNGQP and LISTTTEPWTGTFTSTSTEMTTITGTNGQP. A compositionally biased stretch (low complexity) spans 773–795; sequence TTTEPWTGTFTSTSTEMTTVTGT. Residues 863 to 885 are compositionally biased toward low complexity; the sequence is TTTEPWTGTFTSTSTEMTTITGT. The disordered stretch occupies residues 995–1024; sequence LISTTTEPWTGTFTSTSTEMTTVTGTNGQP. Low complexity predominate over residues 998-1020; that stretch reads TTTEPWTGTFTSTSTEMTTVTGT. N1114 carries N-linked (GlcNAc...) asparagine glycosylation. Tandem repeats lie at residues 1118–1137 and 1138–1157. Residues 1118 to 1157 are 2 X 20 AA approximate tandem repeats, Ser/Thr-rich; sequence VISSSVISSSVTSSLFTSSPVISSSVISSSTTTSTSIFSE. Residues 1161-1220 show a composition bias toward low complexity; that stretch reads SSVIPTSSSTSGSSESETSSAGSVSSSSFISSESSKSPTYSSSSLPLVTSATTSQETASS. Residues 1161–1232 are disordered; the sequence is SSVIPTSSST…PATTTKTSEQ (72 aa). Residues 1222–1232 show a composition bias toward polar residues; the sequence is PPATTTKTSEQ. 6 tandem repeats follow at residues 1226–1276, 1291–1341, 1342–1392, 1408–1416, 1417–1425, and 1426–1434. The tract at residues 1226–1392 is 3 X 51 AA approximate repeats, Ser/Thr-rich; the sequence is TTKTSEQTTL…TVYPTWRPQT (167 aa). Polar residues predominate over residues 1392 to 1404; sequence TANEESVSSKMNS. A disordered region spans residues 1392–1414; it reads TANEESVSSKMNSATGETTTNTL. Over residues 1405–1414 the composition is skewed to low complexity; sequence ATGETTTNTL. The 3 X 9 AA approximate tandem repeats, Thr-rich stretch occupies residues 1408-1434; the sequence is ETTTNTLAAETTTNTVAAETITNTGAA. The interval 1468–1497 is disordered; it reads VSVSETGNTKSLTSSGLSTMSQQPRSTPAS. Over residues 1472-1497 the composition is skewed to polar residues; the sequence is ETGNTKSLTSSGLSTMSQQPRSTPAS. G1514 is lipidated: GPI-anchor amidated glycine. Residues 1515 to 1537 constitute a propeptide, removed in mature form; the sequence is SANSLLAGSGLSVFIASLLLAII.

This sequence belongs to the flocculin family. Extensively N- and O-glycosylated. In terms of processing, the GPI-anchor is attached to the protein in the endoplasmic reticulum and serves to target the protein to the cell surface. There, the glucosamine-inositol phospholipid moiety is cleaved off and the GPI-modified mannoprotein is covalently attached via its lipidless GPI glycan remnant to the 1,6-beta-glucan of the outer cell wall layer.

It is found in the cell membrane. It localises to the secreted. Its subcellular location is the cell wall. Its function is as follows. Cell wall protein that participates directly in adhesive cell-cell interactions during yeast flocculation, a reversible, asexual and Ca(2+)-dependent process in which cells adhere to form aggregates (flocs) consisting of thousands of cells. The lectin-like protein sticks out of the cell wall of flocculent cells and selectively binds mannose residues in the cell walls of adjacent cells. Activity is inhibited by mannose, but not by glucose, maltose, sucrose or galactose. Also involved in cell-substrate adhesion. The chain is Flocculation protein FLO1 (FLO1) from Saccharomyces cerevisiae (strain ATCC 204508 / S288c) (Baker's yeast).